We begin with the raw amino-acid sequence, 361 residues long: Putative pumilio homolog 22 (361 aa).

A PUM-HD domain is found at 5–348 (RGYDLASQVL…NIVAIIDSET (344 aa)). Pumilio repeat units lie at residues 27–63 (HITYRHLLVLSSDDNGCVILKKVITIADDFLKDEFLD) and 64–103 (LIAQHAHSLSMHDLGISLIQHVLELDFTKKTTQDDKRLHE). Residues 104–131 (LMAEFDEVLSTSVTADVDKLHKLASKLM) form a Pumilio 3; degenerate repeat. The stretch at 132–167 (LDSDLFFEFVITRRGSLMIQIILGKSEEVDQVILAG) is one Pumilio 4 repeat. The stretch at 168-205 (VKQRFIDVTTNFYGYRIMIQTIKVFKKRGDLKVYDQIL) is one Pumilio 5; degenerate repeat. A Pumilio 6; degenerate repeat occupies 206–243 (RLIGVHALYLTKDPDMGNKTFQHAINLHHQDCTTFIAC). Pumilio repeat units lie at residues 244-284 (GLQS…EIVK) and 285-319 (CDEDTLVRLATDEYGNNILKKFLALAKEHKEDFFG).

It localises to the cytoplasm. In terms of biological role, sequence-specific RNA-binding protein that regulates translation and mRNA stability by binding the 3'-UTR of target mRNAs. In Arabidopsis thaliana (Mouse-ear cress), this protein is Putative pumilio homolog 22 (APUM22).